The following is a 328-amino-acid chain: UPF0252 protein PF0978 (328 aa).

A helical transmembrane segment spans residues 3 to 23; the sequence is VPLLILLFLVLTSGCIAPSTP.

This sequence belongs to the UPF0252 family.

It is found in the membrane. The sequence is that of UPF0252 protein PF0978 from Pyrococcus furiosus (strain ATCC 43587 / DSM 3638 / JCM 8422 / Vc1).